The primary structure comprises 446 residues: Anthranilate N-benzoyltransferase protein 2 (446 aa).

Catalysis depends on proton acceptor residues histidine 164 and aspartate 393.

This sequence belongs to the plant acyltransferase family. Post-translationally, N-terminus is blocked.

It catalyses the reaction anthranilate + benzoyl-CoA = N-benzoylanthranilate + CoA. It participates in phytoalexin biosynthesis; methoxydianthramide B biosynthesis. In terms of biological role, catalyzes the formation of N-benzoylanthranilate, in the course of methoxydianthramide B, a phytoalexin. Phytoalexins are produced in response to infection by parasites, and are essential for the expression of disease resistance. The polypeptide is Anthranilate N-benzoyltransferase protein 2 (HCBT2) (Dianthus caryophyllus (Carnation)).